A 174-amino-acid chain; its full sequence is MSKVFLLLVLSVFALVSCDALSAPVGSKLSLSKTDELNAQPIDAKRMLRAQEEPTNAADEERGMTELANKFKAWAAAIKTWVTNSKLVQSMNNKLASLTQKGRVGQIEKLLKQDNVNVNVLYQNKVKPDELFLALKLDPKLKLIADAPAAWANNPGLSMFYQYATYYAKMTTKA.

The N-terminal stretch at 1–20 (MSKVFLLLVLSVFALVSCDA) is a signal peptide. The RxLR-dEER motif lies at 46–62 (RMLRAQEEPTNAADEER). The segment at 82-99 (VTNSKLVQSMNNKLASLT) is disordered.

The protein belongs to the RxLR effector family. In terms of assembly, interacts with Nicotiana benthamiana ACD11, BPA1 (binding partner of ACD11), as well as BPA-like proteins BPL1, BPL2, BPL3 and BPL4.

The protein localises to the secreted. The protein resides in the host cell membrane. Functionally, secreted effector that activates ROS-mediated cell death in plant host and is essential for virulence. Plays a role in the transition from the biotrophic to necrotrophic stage. Associates with and promotes the degradation of Nicotiana benthamiana BPA1, BPL1, BPL2, and BPL4 to disrupt ACD11 stabilization in a 26S proteasome-dependent manner. The sequence is that of RxLR effector protein 207 from Phytophthora capsici.